Consider the following 558-residue polypeptide: Glucose-6-phosphate isomerase (558 aa).

At Ala2 the chain carries N-acetylalanine. Position 12 is an N6-acetyllysine (Lys12). N6-(2-hydroxyisobutyryl)lysine is present on Lys34. Ser107 carries the post-translational modification Phosphoserine. The residue at position 109 (Thr109) is a Phosphothreonine. Lys142 is modified (N6-acetyllysine). 159–160 is a D-glucose 6-phosphate binding site; that stretch reads GS. Ser185 bears the Phosphoserine; by CK2 mark. D-glucose 6-phosphate is bound at residue 210 to 215; sequence SKTFTT. Thr250 is subject to Phosphothreonine. The D-glucose 6-phosphate site is built by Gln354, Glu358, and His389. The active-site Proton donor is the Glu358. The active site involves His389. An N6-acetyllysine; alternate modification is found at Lys454. Residue Lys454 is modified to N6-malonyllysine; alternate. At Lys454 the chain carries N6-succinyllysine; alternate. The residue at position 455 (Ser455) is a Phosphoserine. Lys519 is a D-glucose 6-phosphate binding site. The active site involves Lys519.

It belongs to the GPI family. As to quaternary structure, homodimer; in the catalytically active form. Monomer in the secreted form. Phosphorylation at Ser-185 by CK2 has been shown to decrease enzymatic activity and may contribute to secretion by a non-classical secretory pathway. Post-translationally, ISGylated.

Its subcellular location is the cytoplasm. It localises to the secreted. The catalysed reaction is alpha-D-glucose 6-phosphate = beta-D-fructose 6-phosphate. It functions in the pathway carbohydrate degradation; glycolysis; D-glyceraldehyde 3-phosphate and glycerone phosphate from D-glucose: step 2/4. Functionally, in the cytoplasm, catalyzes the conversion of glucose-6-phosphate to fructose-6-phosphate, the second step in glycolysis, and the reverse reaction during gluconeogenesis. Besides it's role as a glycolytic enzyme, also acts as a secreted cytokine: acts as an angiogenic factor (AMF) that stimulates endothelial cell motility. Acts as a neurotrophic factor, neuroleukin, for spinal and sensory neurons. It is secreted by lectin-stimulated T-cells and induces immunoglobulin secretion. The chain is Glucose-6-phosphate isomerase from Pongo abelii (Sumatran orangutan).